Consider the following 123-residue polypeptide: Kininogen (123 aa).

Bradykinin is released from kininogen by kallikrein. In terms of processing, N-glycosylated. Contains sulfated N-acetylglucosamine and O-acetylated sialic acids as terminal elements on biantennary and triantennary N-glycans.

Functionally, inhibits papain and ficin (cysteine proteinases) but not trypsin (a serine proteinase). The protein is Kininogen of Gadus morhua (Atlantic cod).